Reading from the N-terminus, the 110-residue chain is MGQNDLVKTLRMNYLFDFYQSLLTNKQKNYLELFYLQDYSLSEIADTFEVSRQAVYDNIRRTGDLVEDYESKLRLYQRFEKRRELYNLMKQSLNQPELLKQYITQLEELE.

Belongs to the UPF0122 family.

Might take part in the signal recognition particle (SRP) pathway. This is inferred from the conservation of its genetic proximity to ftsY/ffh. May be a regulatory protein. The sequence is that of UPF0122 protein SERP0802 from Staphylococcus epidermidis (strain ATCC 35984 / DSM 28319 / BCRC 17069 / CCUG 31568 / BM 3577 / RP62A).